A 1070-amino-acid polypeptide reads, in one-letter code: DNA-directed RNA polymerase subunit beta (1070 aa).

It belongs to the RNA polymerase beta chain family. As to quaternary structure, in plastids the minimal PEP RNA polymerase catalytic core is composed of four subunits: alpha, beta, beta', and beta''. When a (nuclear-encoded) sigma factor is associated with the core the holoenzyme is formed, which can initiate transcription.

The protein localises to the plastid. The protein resides in the chloroplast. The enzyme catalyses RNA(n) + a ribonucleoside 5'-triphosphate = RNA(n+1) + diphosphate. Its function is as follows. DNA-dependent RNA polymerase catalyzes the transcription of DNA into RNA using the four ribonucleoside triphosphates as substrates. This Silene latifolia (White campion) protein is DNA-directed RNA polymerase subunit beta.